Consider the following 273-residue polypeptide: Dermonecrotic toxin LspaSicTox-alphaIA2i (273 aa).

The active site involves His5. Residues Glu25 and Asp27 each contribute to the Mg(2+) site. His41 acts as the Nucleophile in catalysis. 2 disulfide bridges follow: Cys45–Cys51 and Cys47–Cys190. Asp85 is a Mg(2+) binding site.

This sequence belongs to the arthropod phospholipase D family. Class II subfamily. It depends on Mg(2+) as a cofactor. In terms of tissue distribution, expressed by the venom gland.

The protein localises to the secreted. It carries out the reaction an N-(acyl)-sphingosylphosphocholine = an N-(acyl)-sphingosyl-1,3-cyclic phosphate + choline. The enzyme catalyses an N-(acyl)-sphingosylphosphoethanolamine = an N-(acyl)-sphingosyl-1,3-cyclic phosphate + ethanolamine. It catalyses the reaction a 1-acyl-sn-glycero-3-phosphocholine = a 1-acyl-sn-glycero-2,3-cyclic phosphate + choline. The catalysed reaction is a 1-acyl-sn-glycero-3-phosphoethanolamine = a 1-acyl-sn-glycero-2,3-cyclic phosphate + ethanolamine. In terms of biological role, dermonecrotic toxins cleave the phosphodiester linkage between the phosphate and headgroup of certain phospholipids (sphingolipid and lysolipid substrates), forming an alcohol (often choline) and a cyclic phosphate. This toxin acts on sphingomyelin (SM). It may also act on ceramide phosphoethanolamine (CPE), lysophosphatidylcholine (LPC) and lysophosphatidylethanolamine (LPE), but not on lysophosphatidylserine (LPS), and lysophosphatidylglycerol (LPG). It acts by transphosphatidylation, releasing exclusively cyclic phosphate products as second products. Induces dermonecrosis, hemolysis, increased vascular permeability, edema, inflammatory response, and platelet aggregation. In Loxosceles spadicea (Recluse spider), this protein is Dermonecrotic toxin LspaSicTox-alphaIA2i.